A 640-amino-acid chain; its full sequence is MSFFAGKLNNKSILSLRRGSGGDTNQHINPDSQTIFHSDMSHVIITETHSTGLRLDQGAGDYYWSEMPSRVTQLHNNDPNRVVLTEIEFSDGSRHMLSGMSMGVGAKAYGIINPQIMSQGGLKTQITASADLSLDVGYFNTGTSGTIPQKLRDGTGCQHMFGAFSGRRGFASSAMYLGGAALYKSAWSGSGYVVADAGTLTIPSDYVRHPGARNFGFNAIYVRGRSCNRVLYGMEGPNYTTGGAVQGASSSGALNFTYNPSNPESPKYSVGFARADPTNYAYWESMGDPNDSANGPIGIYSEHLGIYPSKITWYVTNLVYNGSGYNIDGGLFNGNDIKLSPREFIIKGVNVNNTSWKFINFIEKNFNVGNRADFRDVGCNLSKDSPSTGISGIATFGLPTTESNNAPSIKGGNVGGLHANVVSIYNFLPSASWYVSSNPPKIGNNYGDVWSENLLPLRLLGGSGSTILSGNIVFQGNGSVHVGTVGLDLNSSRNGAIVCTMEFIDDTWLSAGGIGCFNPTEMLSQGAEYGDSRFRIGGNTINKKLHQILSLPAGEYVPFFTIKGTVVNACKLQAAAYNPTPYWVSGLPGSVGQTGYYTLTYYMRNDGNNNISIWLDSSMSNIIGMKACLPNIKLIIQRLT.

The tract at residues 571-580 (KLQAAAYNPT) is interaction with host FhuA.

Monomer. Interacts with straight fiber protein pb4. Interacts with the host FhuA receptor; this interaction is necessary for the entry of the viral genome into the host cell.

The protein resides in the virion. Functionally, structural component of the distal part of the tail. Mediates T5 irreversible binding to its host entry receptor, the E.coli outer membrane ferrichrome transporter FhuA protein. Upon binding to host FhuA, pb5 undergoes conformational changes that are probably the key to the transmission of the signal through the tail to the capsid, triggering DNA release. The sequence is that of Receptor-binding protein pb5 (oad) from Escherichia coli (Enterobacteria phage T5).